The primary structure comprises 554 residues: Intraflagellar transport protein 56 (554 aa).

Residues 1 to 27 form a disordered region; the sequence is MMLSRAKPAVGGESPHTDKRKKKGRKI. The segment covering 18 to 27 has biased composition (basic residues); the sequence is DKRKKKGRKI. TPR repeat units lie at residues 57 to 90, 92 to 125, 151 to 184, and 468 to 501; these read DDTN…ENCN, EVWV…LQNR, KEDQ…NREY, and ANDC…EGKR.

It belongs to the IFT56 family. Component of the IFT complex B. Interacts with IFT46; the interaction is direct. In terms of tissue distribution, high expression detected in testis. Detected also retina, kidney, lung and brain tissue. The expression level is low in spleen. Expressed in the developing liver. Present in the airway epithelial cells and the testes (at protein level).

The protein resides in the cell projection. Its subcellular location is the cilium. In terms of biological role, component of the intraflagellar transport (IFT) complex B required for transport of proteins in the motile cilium. Required for transport of specific ciliary cargo proteins related to motility, while it is neither required for IFT complex B assembly or motion nor for cilium assembly. Required for efficient coupling between the accumulation of GLI2 and GLI3 at the ciliary tips and their dissociation from the negative regulator SUFU. Plays a key role in maintaining the integrity of the IFT complex B and the proper ciliary localization of the IFT complex B components. Not required for IFT complex A ciliary localization or function. Essential for maintaining proper microtubule organization within the ciliary axoneme. The polypeptide is Intraflagellar transport protein 56 (Mus musculus (Mouse)).